The sequence spans 1217 residues: Endonuclease YhcR (1217 aa).

A signal peptide spans 1 to 46 (MLSVEMISRQNRCHYVYKGGNMMRRILHIVLITALMFLNVMYTFEA). The TNase-like domain occupies 376-517 (GEYEGIVDRV…KKDQKGIWNE (142 aa)). Residues Arg404, Glu412, and Arg460 contribute to the active site. The interval 590 to 828 (LRILSMNDLH…VIFAAHNHQV (239 aa)) is phosphoesterase. A divalent metal cation is bound by residues Asp597, His599, Asp647, Asn680, His792, and His824. The tract at residues 829–1085 (VNGEVNGKLI…AYTKEGRIKL (257 aa)) is 5'-nucleotidase. Substrate contacts are provided by residues Phe965 and 1035-1042 (FMATATGA). Positions 1087–1142 (EASDIEDPVTEDPITEEPGDDPGTEDPIKEDPRPGEDLPDIKETPGTAPVHQLPPS) are disordered. Residues 1089–1110 (SDIEDPVTEDPITEEPGDDPGT) show a composition bias toward acidic residues. Basic and acidic residues predominate over residues 1112 to 1129 (DPIKEDPRPGEDLPDIKE). The LPXTG sorting signal motif lies at 1182–1186 (LPDTS). Pentaglycyl murein peptidoglycan amidated threonine is present on Thr1185. Residues 1186–1217 (SAGYYNFMVIGAAVTLSGTYLYVRRKRSASRT) constitute a propeptide, removed by sortase.

This sequence in the C-terminal section; belongs to the 5'-nucleotidase family. It depends on Ca(2+) as a cofactor. The cofactor is Mn(2+).

The protein resides in the secreted. It localises to the cell wall. Requires a minimum of 0.1 mM of calcium for a significant activity. Maximal activity was observed with concentrations of calcium between 1 to 5 mM. Is 10-fold less active with the corresponding concentrations of manganese. Inhibited by NaCl at concentrations of 100 mM and higher. Functionally, sugar-nonspecific endonuclease that yields nucleotide 3'-monophosphate products. No 5'-nucleotidase activity was detected, using 5'-AMP as the substrate, in the presence of diverse divalent metals and with various pH values. The protein is Endonuclease YhcR (yhcR) of Bacillus subtilis (strain 168).